The primary structure comprises 450 residues: 3-phosphoshikimate 1-carboxyvinyltransferase (450 aa).

Positions 1 to 23 (MSSHGAPIPMTSSACGPLTGEAR) are disordered. 3-phosphoshikimate is bound by residues K28, S29, and R33. K28 contacts phosphoenolpyruvate. Residues G101 and R129 each contribute to the phosphoenolpyruvate site. 3-phosphoshikimate-binding residues include S174, Q176, D327, and K354. Q176 serves as a coordination point for phosphoenolpyruvate. D327 functions as the Proton acceptor in the catalytic mechanism. Residues R358 and R403 each coordinate phosphoenolpyruvate.

The protein belongs to the EPSP synthase family. As to quaternary structure, monomer.

It localises to the cytoplasm. It catalyses the reaction 3-phosphoshikimate + phosphoenolpyruvate = 5-O-(1-carboxyvinyl)-3-phosphoshikimate + phosphate. The protein operates within metabolic intermediate biosynthesis; chorismate biosynthesis; chorismate from D-erythrose 4-phosphate and phosphoenolpyruvate: step 6/7. In terms of biological role, catalyzes the transfer of the enolpyruvyl moiety of phosphoenolpyruvate (PEP) to the 5-hydroxyl of shikimate-3-phosphate (S3P) to produce enolpyruvyl shikimate-3-phosphate and inorganic phosphate. This Roseobacter denitrificans (strain ATCC 33942 / OCh 114) (Erythrobacter sp. (strain OCh 114)) protein is 3-phosphoshikimate 1-carboxyvinyltransferase.